The primary structure comprises 420 residues: S-adenosylmethionine synthase (420 aa).

An ATP-binding site is contributed by His-16. Asp-18 is a binding site for Mg(2+). Residue Glu-44 coordinates K(+). L-methionine contacts are provided by Glu-57 and Gln-100. The tract at residues 100–110 is flexible loop; sequence QSPDIAQGVNT. ATP is bound by residues 175–177, 251–252, Asp-260, 266–267, Ala-283, and Lys-287; these read DGK, KF, and RK. Position 260 (Asp-260) interacts with L-methionine. Lys-291 lines the L-methionine pocket.

Belongs to the AdoMet synthase family. Homotetramer; dimer of dimers. Mg(2+) is required as a cofactor. It depends on K(+) as a cofactor.

It localises to the cytoplasm. The catalysed reaction is L-methionine + ATP + H2O = S-adenosyl-L-methionine + phosphate + diphosphate. The protein operates within amino-acid biosynthesis; S-adenosyl-L-methionine biosynthesis; S-adenosyl-L-methionine from L-methionine: step 1/1. Functionally, catalyzes the formation of S-adenosylmethionine (AdoMet) from methionine and ATP. The overall synthetic reaction is composed of two sequential steps, AdoMet formation and the subsequent tripolyphosphate hydrolysis which occurs prior to release of AdoMet from the enzyme. This chain is S-adenosylmethionine synthase, found in Trichormus variabilis (strain ATCC 29413 / PCC 7937) (Anabaena variabilis).